A 388-amino-acid chain; its full sequence is Succinate--CoA ligase [ADP-forming] subunit beta (388 aa).

The ATP-grasp domain occupies 9–244; it reads KQLFAEYGLP…PSQDDPREAH (236 aa). Residues Lys-46, 53–55, Glu-99, Thr-102, and Glu-107 each bind ATP; that span reads GRG. Mg(2+) contacts are provided by Asn-199 and Asp-213. Residues Asn-264 and 321 to 323 each bind substrate; that span reads GIV.

It belongs to the succinate/malate CoA ligase beta subunit family. In terms of assembly, heterotetramer of two alpha and two beta subunits. The cofactor is Mg(2+).

It catalyses the reaction succinate + ATP + CoA = succinyl-CoA + ADP + phosphate. The enzyme catalyses GTP + succinate + CoA = succinyl-CoA + GDP + phosphate. It participates in carbohydrate metabolism; tricarboxylic acid cycle; succinate from succinyl-CoA (ligase route): step 1/1. Functionally, succinyl-CoA synthetase functions in the citric acid cycle (TCA), coupling the hydrolysis of succinyl-CoA to the synthesis of either ATP or GTP and thus represents the only step of substrate-level phosphorylation in the TCA. The beta subunit provides nucleotide specificity of the enzyme and binds the substrate succinate, while the binding sites for coenzyme A and phosphate are found in the alpha subunit. This is Succinate--CoA ligase [ADP-forming] subunit beta from Pseudomonas fluorescens (strain Pf0-1).